Reading from the N-terminus, the 144-residue chain is Small ribosomal subunit protein uS19 (144 aa).

It belongs to the universal ribosomal protein uS19 family.

Protein S19 forms a complex with S13 that binds strongly to the 16S ribosomal RNA. The protein is Small ribosomal subunit protein uS19 (rps19) of Aeropyrum pernix (strain ATCC 700893 / DSM 11879 / JCM 9820 / NBRC 100138 / K1).